The sequence spans 98 residues: NADH-ubiquinone oxidoreductase chain 4L (98 aa).

3 helical membrane passes run 1–21 (MPIIYTNIVLAFMISLLGMLI), 29–49 (SLLCLEGMMLSLFMMSTLMAL), and 58–78 (IVPIALLVFAACEAAVGLALL).

Belongs to the complex I subunit 4L family. As to quaternary structure, core subunit of respiratory chain NADH dehydrogenase (Complex I) which is composed of 45 different subunits.

The protein resides in the mitochondrion inner membrane. It carries out the reaction a ubiquinone + NADH + 5 H(+)(in) = a ubiquinol + NAD(+) + 4 H(+)(out). Core subunit of the mitochondrial membrane respiratory chain NADH dehydrogenase (Complex I) which catalyzes electron transfer from NADH through the respiratory chain, using ubiquinone as an electron acceptor. Part of the enzyme membrane arm which is embedded in the lipid bilayer and involved in proton translocation. The sequence is that of NADH-ubiquinone oxidoreductase chain 4L (MT-ND4L) from Nasalis larvatus (Proboscis monkey).